The following is a 278-amino-acid chain: Sulfur carrier protein FdhD (278 aa).

Cys121 serves as the catalytic Cysteine persulfide intermediate. A Mo-bis(molybdopterin guanine dinucleotide)-binding site is contributed by 260 to 265; that stretch reads FCKPGR.

The protein belongs to the FdhD family.

The protein resides in the cytoplasm. Its function is as follows. Required for formate dehydrogenase (FDH) activity. Acts as a sulfur carrier protein that transfers sulfur from IscS to the molybdenum cofactor prior to its insertion into FDH. The sequence is that of Sulfur carrier protein FdhD from Klebsiella pneumoniae subsp. pneumoniae (strain ATCC 700721 / MGH 78578).